We begin with the raw amino-acid sequence, 520 residues long: Cytochrome P450 72A397 (520 aa).

A helical transmembrane segment spans residues 14–34; sequence AVAVAVVVVGWAWKVLNWVWV. C468 is a binding site for heme.

The protein belongs to the cytochrome P450 family. Heme serves as cofactor.

Its subcellular location is the membrane. The enzyme catalyses oleanolate + reduced [NADPH--hemoprotein reductase] + O2 = hederagenin + oxidized [NADPH--hemoprotein reductase] + H2O + H(+). Functionally, catalyzes the oxidation of oleanolate at the C-23 position to form hederagenin. The chain is Cytochrome P450 72A397 from Kalopanax septemlobus (Castor aralia).